We begin with the raw amino-acid sequence, 378 residues long: 3-dehydroquinate synthase (378 aa).

NAD(+) contacts are provided by residues 111 to 115, 135 to 136, Lys148, and Lys157; these read GVIGD and TS. Positions 190, 252, and 271 each coordinate Zn(2+).

The protein belongs to the sugar phosphate cyclases superfamily. Dehydroquinate synthase family. NAD(+) is required as a cofactor. Co(2+) serves as cofactor. The cofactor is Zn(2+).

Its subcellular location is the cytoplasm. It carries out the reaction 7-phospho-2-dehydro-3-deoxy-D-arabino-heptonate = 3-dehydroquinate + phosphate. It participates in metabolic intermediate biosynthesis; chorismate biosynthesis; chorismate from D-erythrose 4-phosphate and phosphoenolpyruvate: step 2/7. In terms of biological role, catalyzes the conversion of 3-deoxy-D-arabino-heptulosonate 7-phosphate (DAHP) to dehydroquinate (DHQ). In Mesorhizobium japonicum (strain LMG 29417 / CECT 9101 / MAFF 303099) (Mesorhizobium loti (strain MAFF 303099)), this protein is 3-dehydroquinate synthase.